Consider the following 1505-residue polypeptide: Anaphase-promoting complex subunit 1 (1505 aa).

It belongs to the APC1 family. The APC/C complex is probably composed of at least 12 subunits: apc-2, apc-10, apc-11, cdc-26, emb-1, emb-27, emb-30, mat-1, mat-2, mat-3, such-1 and gfi-3.

The protein operates within protein modification; protein ubiquitination. Probable component of the anaphase promoting complex/cyclosome (APC/C), a cell cycle-regulated E3 ubiquitin ligase that controls progression through mitosis and the G1 phase of the cell cycle. The APC/C complex acts by mediating ubiquitination and subsequent degradation of target proteins. Developmental role in early embryogenesis and the metaphase to anaphase transition in oocyte and spermatocyte meiosis and mitosis in germ cells. Required for embryonic anterior-posterior axis formation. Plays a role in regulating the abundance of glr-1 receptors in postmitotic neurons, which may in turn control animal locomotion. Involved in regulating GABA neurotransmitter release at neuromuscular junctions in GABA motor neurons. The sequence is that of Anaphase-promoting complex subunit 1 from Caenorhabditis elegans.